The chain runs to 113 residues: Large ribosomal subunit protein bL17 (113 aa).

Belongs to the bacterial ribosomal protein bL17 family. Part of the 50S ribosomal subunit. Contacts protein L32.

In Clostridium botulinum (strain Loch Maree / Type A3), this protein is Large ribosomal subunit protein bL17.